The chain runs to 213 residues: DNA-directed RNA polymerase subunit alpha (213 aa).

The protein belongs to the RNA polymerase alpha chain family. In terms of assembly, in plastids the minimal PEP RNA polymerase catalytic core is composed of four subunits: alpha, beta, beta', and beta''. When a (nuclear-encoded) sigma factor is associated with the core the holoenzyme is formed, which can initiate transcription.

The protein localises to the plastid. It localises to the chloroplast. It catalyses the reaction RNA(n) + a ribonucleoside 5'-triphosphate = RNA(n+1) + diphosphate. Its function is as follows. DNA-dependent RNA polymerase catalyzes the transcription of DNA into RNA using the four ribonucleoside triphosphates as substrates. The protein is DNA-directed RNA polymerase subunit alpha (rpoA) of Euglena stellata.